The sequence spans 65 residues: Potassium channel toxin kappa-KTx 2.6 (65 aa).

The first 27 residues, 1–27 (MKTSKMICAFLLVLVVGTFNDISGAYG), serve as a signal peptide directing secretion. Residues 28–39 (EYVEDQHSFKIE) constitute a propeptide that is removed on maturation. 2 disulfide bridges follow: cysteine 45–cysteine 63 and cysteine 49–cysteine 59.

The protein belongs to the short scorpion toxin superfamily. Potassium channel inhibitor kappa-KTx family. Kappa-KTx 2 subfamily. In terms of tissue distribution, expressed by the venom gland.

It localises to the secreted. Functionally, potassium channel inhibitor (Kv). The chain is Potassium channel toxin kappa-KTx 2.6 from Opisthacanthus cayaporum (South American scorpion).